The primary structure comprises 163 residues: Nucleotide-binding protein EAT1b_2037 (163 aa).

This sequence belongs to the YajQ family.

Functionally, nucleotide-binding protein. This chain is Nucleotide-binding protein EAT1b_2037, found in Exiguobacterium sp. (strain ATCC BAA-1283 / AT1b).